We begin with the raw amino-acid sequence, 505 residues long: Apolipoprotein N-acyltransferase (505 aa).

A run of 6 helical transmembrane segments spans residues 15 to 46 (AAFV…LLLL), 55 to 75 (ALIA…WVHV), 89 to 109 (LFLM…FGWL), 129 to 149 (LWLI…WLWL), 161 to 181 (FAPI…AGSL), and 192 to 212 (MACI…MQWV). The CN hydrolase domain occupies 225-471 (IQGNIEQGLK…TGVLKATVTP (247 aa)). The active-site Proton acceptor is the Glu-264. Lys-330 is a catalytic residue. Cys-382 acts as the Nucleophile in catalysis. The helical transmembrane segment at 479–499 (FLWGTTPLYLWVGLAAGFAFW) threads the bilayer.

The protein belongs to the CN hydrolase family. Apolipoprotein N-acyltransferase subfamily.

It is found in the cell inner membrane. The catalysed reaction is N-terminal S-1,2-diacyl-sn-glyceryl-L-cysteinyl-[lipoprotein] + a glycerophospholipid = N-acyl-S-1,2-diacyl-sn-glyceryl-L-cysteinyl-[lipoprotein] + a 2-acyl-sn-glycero-3-phospholipid + H(+). It functions in the pathway protein modification; lipoprotein biosynthesis (N-acyl transfer). In terms of biological role, catalyzes the phospholipid dependent N-acylation of the N-terminal cysteine of apolipoprotein, the last step in lipoprotein maturation. The protein is Apolipoprotein N-acyltransferase of Vibrio cholerae serotype O1 (strain ATCC 39315 / El Tor Inaba N16961).